A 448-amino-acid polypeptide reads, in one-letter code: Homogentisate 1,2-dioxygenase (448 aa).

His303 (proton acceptor) is an active-site residue. Residues His346 and Glu352 each contribute to the Fe cation site. 2 residues coordinate homogentisate: Tyr361 and His382. His382 serves as a coordination point for Fe cation.

The protein belongs to the homogentisate dioxygenase family. In terms of assembly, hexamer; dimer of trimers. It depends on Fe cation as a cofactor.

It catalyses the reaction homogentisate + O2 = 4-maleylacetoacetate + H(+). It participates in amino-acid degradation; L-phenylalanine degradation; acetoacetate and fumarate from L-phenylalanine: step 4/6. Its function is as follows. Involved in the catabolism of homogentisate (2,5-dihydroxyphenylacetate or 2,5-OH-PhAc), a central intermediate in the degradation of phenylalanine and tyrosine. Catalyzes the oxidative ring cleavage of the aromatic ring of homogentisate to yield maleylacetoacetate. The protein is Homogentisate 1,2-dioxygenase of Rhodopseudomonas palustris (strain BisB5).